The following is a 42-amino-acid chain: Large ribosomal subunit protein bL36 (42 aa).

This sequence belongs to the bacterial ribosomal protein bL36 family.

The chain is Large ribosomal subunit protein bL36 from Wolbachia sp. subsp. Brugia malayi (strain TRS).